Here is a 231-residue protein sequence, read N- to C-terminus: Claudin-10 (231 aa).

The chain crosses the membrane as a helical span at residues 1–21 (MASTALEIVAFVVSISGWVLV). Over 22 to 80 (SSTLPTDYWKVSTIDGTVITTATYFANLWKICVTDSTGVANCKEFPSMLALDGYIQACR) the chain is Extracellular. Residues 81–101 (GLMIAAVSLGFFGSIFALFGM) form a helical membrane-spanning segment. Residues 102-115 (KCTKVGGSDQAKAK) are Cytoplasmic-facing. The chain crosses the membrane as a helical span at residues 116-136 (IACLAGIVFILSGLCSMTGCS). At 137–160 (LYANKITTEFFDPLYMEQKYELGA) the chain is on the extracellular side. The chain crosses the membrane as a helical span at residues 161 to 181 (ALFIGWAGASLCIIGGVIFCF). The Cytoplasmic portion of the chain corresponds to 182–231 (SISDNNKTPRMGYTYNGPTSAMSSRTKYQGGEGDFKTTGPSKQFDKNAYV).

The protein belongs to the claudin family. In terms of assembly, can form homodimers both in trans (interaction between CLDN10 molecules in opposing membranes) and in cis (interaction between CLDN10 molecules within one membrane). Interacts with CLDN19. As to expression, widely expressed, with highest expression detected in brain cortex, kidney and lung. In kidney, the expression is highest in medulla, with transcripts being detected in medullary thick ascending limb of Henle's loop (mTAL) and outer and inner medullary collecting ducts. Expressed in salivary glands and skin. In terms of tissue distribution, detected in kidney with transcripts being detected in PCT, mTAL and cortical collecting duct. Detected in uterus. Expressed in proximal tubules (at protein level). Only detected in kidney and uterus. As to expression, detected in kidney with transcripts being detected in PCT, mTAL and cortical collecting duct. Detected in uterus. In terms of tissue distribution, expressed in the inner ear where it is detected in organ of Corti, marginal cells of stria vascularis, Reissner's membrane and spiral limbus (at protein level).

It localises to the cell junction. The protein localises to the tight junction. It is found in the cell membrane. Its subcellular location is the endoplasmic reticulum. It carries out the reaction Na(+)(in) = Na(+)(out). It catalyses the reaction Li(+)(in) = Li(+)(out). The enzyme catalyses K(+)(in) = K(+)(out). The catalysed reaction is Rb(+)(in) = Rb(+)(out). It carries out the reaction Cs(+)(in) = Cs(+)(out). It catalyses the reaction NH4(+)(in) = NH4(+)(out). The enzyme catalyses methylamine(out) = methylamine(in). The catalysed reaction is Mg(2+)(in) = Mg(2+)(out). It carries out the reaction Ca(2+)(in) = Ca(2+)(out). It catalyses the reaction Sr(2+)(in) = Sr(2+)(out). The enzyme catalyses chloride(in) = chloride(out). The catalysed reaction is nitrate(in) = nitrate(out). In terms of biological role, forms paracellular channels: polymerizes in tight junction strands with cation- and anion-selective channels through the strands, conveying epithelial permeability in a process known as paracellular tight junction permeability. Forms cation-selective paracellular channels. In sweat glands and in the thick ascending limb (TAL) of Henle's loop in kidney, it controls paracellular sodium permeability which is essential for proper sweat production and renal function. Functionally, forms anion-selective paracellular channels. In renal proximal tubules, it conveys selective chloride over hydrogencarbonate anion permeability which is required for renal chloride reabsorption and salt homeostasis. The polypeptide is Claudin-10 (Mus musculus (Mouse)).